We begin with the raw amino-acid sequence, 706 residues long: G2/M phase-specific E3 ubiquitin-protein ligase (706 aa).

A C2HC pre-PHD-type zinc finger spans residues 11–51 (NLACVFCRKHDDCPNKYGEKKTKEKWNLTVHYYCLLMSSGI). The segment at 79 to 128 (LKCCVCKKNGASIGCVAPRCKRSYHFPCGLQRECIFQFTGNFASFCWDHR) adopts a PHD-type 1 zinc-finger fold. A PHD-type 2; degenerate zinc finger spans residues 143 to 193 (PCTICLEFIEPIPSYNILRSPCCKNAWFHRDCLQVQAINAGVFFFRCTICN). A PHD-type 3 zinc finger spans residues 237–286 (RCRCKEGRDYNAPDSKWEIKRCQCCGSSGTHLACSSLRSWEQNWECLECR). Positions 371 to 698 (IWNSALDAFR…IRNTLRLEKE (328 aa)) constitute an HECT domain.

As to expression, predominantly expressed in brain, liver, kidney, testes and ovary.

The protein resides in the nucleus. It localises to the nucleolus. Its subcellular location is the cytoplasm. The catalysed reaction is S-ubiquitinyl-[E2 ubiquitin-conjugating enzyme]-L-cysteine + [acceptor protein]-L-lysine = [E2 ubiquitin-conjugating enzyme]-L-cysteine + N(6)-ubiquitinyl-[acceptor protein]-L-lysine.. The protein operates within protein modification; protein ubiquitination. E3 ubiquitin-protein ligase which accepts ubiquitin from an E2 ubiquitin-conjugating enzyme in the form of a thioester and then directly transfers the ubiquitin to targeted substrates. Essential in early embryonic development to prevent apoptotic death. The sequence is that of G2/M phase-specific E3 ubiquitin-protein ligase (G2E3) from Homo sapiens (Human).